An 85-amino-acid chain; its full sequence is Putative regulatory protein Dtur_1444 (85 aa).

The protein belongs to the RemA family.

In Dictyoglomus turgidum (strain DSM 6724 / Z-1310), this protein is Putative regulatory protein Dtur_1444.